We begin with the raw amino-acid sequence, 533 residues long: Tryptophan N-monooxygenase CYP79A68 (533 aa).

A helical transmembrane segment spans residues 12–32; that stretch reads VTPPISLSLAFIIFMFLVKFI. Residue Asn-209 is glycosylated (N-linked (GlcNAc...) asparagine). Cys-471 contributes to the heme binding site.

The protein belongs to the cytochrome P450 family. Heme is required as a cofactor. Confined to buds.

It localises to the membrane. It carries out the reaction L-tryptophan + 2 reduced [NADPH--hemoprotein reductase] + 2 O2 = (E)-(indol-3-yl)acetaldehyde oxime + 2 oxidized [NADPH--hemoprotein reductase] + CO2 + 3 H2O + 2 H(+). In terms of biological role, catalyzes with low efficiency E and Z isomers of indole-3-acetaldoxime from tryptophan (Trp). The chain is Tryptophan N-monooxygenase CYP79A68 from Prunus mume (Japanese apricot).